We begin with the raw amino-acid sequence, 241 residues long: FKBP-type peptidyl-prolyl cis-trans isomerase FkpA (241 aa).

The PPIase FKBP-type domain maps to 153–241; sequence ETKITVHYKG…IELLDVVNGV (89 aa).

Belongs to the FKBP-type PPIase family.

It carries out the reaction [protein]-peptidylproline (omega=180) = [protein]-peptidylproline (omega=0). Functionally, PPIases accelerate the folding of proteins. It catalyzes the cis-trans isomerization of proline imidic peptide bonds in oligopeptides. In Buchnera aphidicola subsp. Acyrthosiphon pisum (strain APS) (Acyrthosiphon pisum symbiotic bacterium), this protein is FKBP-type peptidyl-prolyl cis-trans isomerase FkpA (fkpA).